The sequence spans 125 residues: Ribosome-binding factor A (125 aa).

This sequence belongs to the RbfA family. As to quaternary structure, monomer. Binds 30S ribosomal subunits, but not 50S ribosomal subunits or 70S ribosomes.

The protein resides in the cytoplasm. Functionally, one of several proteins that assist in the late maturation steps of the functional core of the 30S ribosomal subunit. Associates with free 30S ribosomal subunits (but not with 30S subunits that are part of 70S ribosomes or polysomes). Required for efficient processing of 16S rRNA. May interact with the 5'-terminal helix region of 16S rRNA. This Methylobacillus flagellatus (strain ATCC 51484 / DSM 6875 / VKM B-1610 / KT) protein is Ribosome-binding factor A.